We begin with the raw amino-acid sequence, 200 residues long: Imidazoleglycerol-phosphate dehydratase (200 aa).

It belongs to the imidazoleglycerol-phosphate dehydratase family.

The protein resides in the cytoplasm. It carries out the reaction D-erythro-1-(imidazol-4-yl)glycerol 3-phosphate = 3-(imidazol-4-yl)-2-oxopropyl phosphate + H2O. The protein operates within amino-acid biosynthesis; L-histidine biosynthesis; L-histidine from 5-phospho-alpha-D-ribose 1-diphosphate: step 6/9. This Leifsonia xyli subsp. xyli (strain CTCB07) protein is Imidazoleglycerol-phosphate dehydratase.